Reading from the N-terminus, the 780-residue chain is ATPase family gene 2 protein (780 aa).

The segment covering Met1–Ala23 has biased composition (low complexity). The interval Met1–Ser26 is disordered. Residues Gly286–Thr293 and Gly557–Thr564 contribute to the ATP site.

It belongs to the AAA ATPase family. AFG2 subfamily. In terms of assembly, homohexamer; ATP binding induces oligomerization. Forms a ring-shaped particle of about 12 nm diameter, that displays 6-fold radial symmetry. Associates with cytoplasmic pre-60S ribosomal particles containing ARX1, ALB1, RLP24 and NOG1. Binds to pre-60S ribosomal particles soon after their export from the nucleus and is released before REI1 and LSG1 are incorporated into the particles. Hexameric form interacts with RLP24 (via C-terminal); the interaction recruits AFG2 to pre-60S ribosomal particles and promotes AFG2 ATPase activity and RLP24 release from pre-60S ribosomal particles. Interacts (via N-terminus) with nucleoporin NUP116 (via N-terminus); the interaction is required for RLP24 release from pre-60S ribosomal particles.

The protein resides in the cytoplasm. The enzyme catalyses ATP + H2O = ADP + phosphate + H(+). Its activity is regulated as follows. The hexamer is activated by RLP24 during pre-60S ribosomal particle maturation; RLP24 activates ATPase activity of both ATP-binding regions and increases cooperativity between AFG2 subunits. The second ATP-binding region is inhibited by diazaborine; the inhibition requires prior ATP binding specifically to the second ATP-binding region. Its function is as follows. ATP-dependent chaperone which uses the energy provided by ATP hydrolysis to generate mechanical force to disassemble protein complexes. Plays an essential role in the cytoplasmic maturation steps of pre-60S ribosomal particles by promoting the release of shuttling protein RLP24 from the pre-ribosomal particles. This step facilitates the subsequent release of other shuttling proteins such as NOG1 and allows the transition of the pre-ribosomal particles to later maturation forms that bind REI1. Essential for viability. The chain is ATPase family gene 2 protein from Saccharomyces cerevisiae (strain ATCC 204508 / S288c) (Baker's yeast).